Here is an 86-residue protein sequence, read N- to C-terminus: MSLLDYFKSSKKPATAVTAKERLQIIVAHQRGERDAPDYFPQMKQEIIEVIKKYVHIDPEQVSVQLDKNDNKLSVLELNVTLPEKS.

The protein belongs to the MinE family.

In terms of biological role, prevents the cell division inhibition by proteins MinC and MinD at internal division sites while permitting inhibition at polar sites. This ensures cell division at the proper site by restricting the formation of a division septum at the midpoint of the long axis of the cell. This chain is Cell division topological specificity factor, found in Shewanella woodyi (strain ATCC 51908 / MS32).